The following is a 270-amino-acid chain: Glyoxylate pathway regulator (270 aa).

Residues 1–33 (MNTEIPDLEKQQIDHNSGSDDPQPIHDDMAPVS) are disordered. Y58 carries the phosphotyrosine modification. At S74 the chain carries Phosphoserine. Transmembrane regions (helical) follow at residues 80-100 (PAPLGLSAFALTTLVFSLCTV), 109-129 (SIAVGLALFYGGVCQFAAGMW), 137-157 (FGAAALTSYGGFWMSWAAIEM), 175-195 (AVGIYLFGWFIFTLMLTLCTL), 198-218 (TVAFFGLFFMLMMTFLVLACA), and 227-247 (AIGGGWLGIITAFFGFYNAYA).

This sequence belongs to the acetate uptake transporter (AceTr) (TC 2.A.96) family.

Its subcellular location is the membrane. Plays a role in the adaptation of cell metabolism to the utilization of acetic acid, possibly by inhibiting an anion-transporting ATPase and affecting the plasma membrane H(+)-ATPase. May be indirectly involved in the repression of genes encoding glyoxylate cycle enzymes. The chain is Glyoxylate pathway regulator (GPR1) from Yarrowia lipolytica (strain CLIB 122 / E 150) (Yeast).